Reading from the N-terminus, the 217-residue chain is Thiamine-phosphate synthase (217 aa).

4-amino-2-methyl-5-(diphosphooxymethyl)pyrimidine contacts are provided by residues 44–48 (QYREK) and Asn76. 2 residues coordinate Mg(2+): Asp77 and Asp96. Residue Ser115 participates in 4-amino-2-methyl-5-(diphosphooxymethyl)pyrimidine binding. Position 141–143 (141–143 (TKT)) interacts with 2-[(2R,5Z)-2-carboxy-4-methylthiazol-5(2H)-ylidene]ethyl phosphate. Lys144 contacts 4-amino-2-methyl-5-(diphosphooxymethyl)pyrimidine. Residues Gly172 and 192–193 (VS) each bind 2-[(2R,5Z)-2-carboxy-4-methylthiazol-5(2H)-ylidene]ethyl phosphate.

This sequence belongs to the thiamine-phosphate synthase family. Mg(2+) is required as a cofactor.

The enzyme catalyses 2-[(2R,5Z)-2-carboxy-4-methylthiazol-5(2H)-ylidene]ethyl phosphate + 4-amino-2-methyl-5-(diphosphooxymethyl)pyrimidine + 2 H(+) = thiamine phosphate + CO2 + diphosphate. It catalyses the reaction 2-(2-carboxy-4-methylthiazol-5-yl)ethyl phosphate + 4-amino-2-methyl-5-(diphosphooxymethyl)pyrimidine + 2 H(+) = thiamine phosphate + CO2 + diphosphate. It carries out the reaction 4-methyl-5-(2-phosphooxyethyl)-thiazole + 4-amino-2-methyl-5-(diphosphooxymethyl)pyrimidine + H(+) = thiamine phosphate + diphosphate. Its pathway is cofactor biosynthesis; thiamine diphosphate biosynthesis; thiamine phosphate from 4-amino-2-methyl-5-diphosphomethylpyrimidine and 4-methyl-5-(2-phosphoethyl)-thiazole: step 1/1. In terms of biological role, condenses 4-methyl-5-(beta-hydroxyethyl)thiazole monophosphate (THZ-P) and 2-methyl-4-amino-5-hydroxymethyl pyrimidine pyrophosphate (HMP-PP) to form thiamine monophosphate (TMP). In Lawsonia intracellularis (strain PHE/MN1-00), this protein is Thiamine-phosphate synthase.